Consider the following 104-residue polypeptide: NADH-quinone oxidoreductase subunit K (104 aa).

Helical transmembrane passes span 7 to 27, 31 to 51, and 63 to 83; these read PDMA…GVLV, LLFM…AFVA, and VMFL…LAIL.

It belongs to the complex I subunit 4L family. As to quaternary structure, NDH-1 is composed of 14 different subunits. Subunits NuoA, H, J, K, L, M, N constitute the membrane sector of the complex.

It localises to the cell inner membrane. The enzyme catalyses a quinone + NADH + 5 H(+)(in) = a quinol + NAD(+) + 4 H(+)(out). Functionally, NDH-1 shuttles electrons from NADH, via FMN and iron-sulfur (Fe-S) centers, to quinones in the respiratory chain. The immediate electron acceptor for the enzyme in this species is believed to be ubiquinone. Couples the redox reaction to proton translocation (for every two electrons transferred, four hydrogen ions are translocated across the cytoplasmic membrane), and thus conserves the redox energy in a proton gradient. The protein is NADH-quinone oxidoreductase subunit K of Gluconacetobacter diazotrophicus (strain ATCC 49037 / DSM 5601 / CCUG 37298 / CIP 103539 / LMG 7603 / PAl5).